Here is a 237-residue protein sequence, read N- to C-terminus: Arginine-binding periplasmic protein (237 aa).

The signal sequence occupies residues 1 to 18 (MKKTLLTLLFGCVVTAQA).

The protein belongs to the bacterial solute-binding protein 3 family.

It localises to the periplasm. Functionally, binds arginine; part of the arginine periplasmic transport system. In Mannheimia haemolytica (Pasteurella haemolytica), this protein is Arginine-binding periplasmic protein (lapT).